The following is a 412-amino-acid chain: Tryptophan synthase beta chain 1 (412 aa).

Lysine 103 is modified (N6-(pyridoxal phosphate)lysine).

The protein belongs to the TrpB family. As to quaternary structure, tetramer of two alpha and two beta chains. It depends on pyridoxal 5'-phosphate as a cofactor.

It catalyses the reaction (1S,2R)-1-C-(indol-3-yl)glycerol 3-phosphate + L-serine = D-glyceraldehyde 3-phosphate + L-tryptophan + H2O. It functions in the pathway amino-acid biosynthesis; L-tryptophan biosynthesis; L-tryptophan from chorismate: step 5/5. In terms of biological role, the beta subunit is responsible for the synthesis of L-tryptophan from indole and L-serine. This chain is Tryptophan synthase beta chain 1 (trpB1), found in Chlamydia caviae (strain ATCC VR-813 / DSM 19441 / 03DC25 / GPIC) (Chlamydophila caviae).